Reading from the N-terminus, the 122-residue chain is MGKISSLPTQLFKCCFCDFLKVKMHIMSSSHLFYLALCLLTFTSSATAGPETLCGAELVDALQFVCGDRGFYFNKPTGYGSSSRRAPQTGIVDECCFRSCDLRRLEMYCAPLKPAKSARSVR.

Residues 49-77 (GPETLCGAELVDALQFVCGDRGFYFNKPT) are b. 3 disulfide bridges follow: Cys-54/Cys-96, Cys-66/Cys-109, and Cys-95/Cys-100. Residues 78 to 89 (GYGSSSRRAPQT) are c. Positions 90-110 (GIVDECCFRSCDLRRLEMYCA) are a. The segment at 111–118 (PLKPAKSA) is d. Residues 119-122 (RSVR) constitute a propeptide, e peptide.

This sequence belongs to the insulin family. Forms a ternary complex with IGFR1 and ITGAV:ITGB3. Forms a ternary complex with IGFR1 and ITGA6:ITGB4. Forms a ternary complex with IGFBP3 and ALS.

Its subcellular location is the secreted. In terms of biological role, the insulin-like growth factors, isolated from plasma, are structurally and functionally related to insulin but have a much higher growth-promoting activity. May be a physiological regulator of [1-14C]-2-deoxy-D-glucose (2DG) transport and glycogen synthesis in osteoblasts. Stimulates glucose transport in bone-derived osteoblastic (PyMS) cells and is effective at much lower concentrations than insulin, not only regarding glycogen and DNA synthesis but also with regard to enhancing glucose uptake. May play a role in synapse maturation. Ca(2+)-dependent exocytosis of IGF1 is required for sensory perception of smell in the olfactory bulb. Acts as a ligand for IGF1R. Binds to the alpha subunit of IGF1R, leading to the activation of the intrinsic tyrosine kinase activity which autophosphorylates tyrosine residues in the beta subunit thus initiating a cascade of down-stream signaling events leading to activation of the PI3K-AKT/PKB and the Ras-MAPK pathways. Binds to integrins ITGAV:ITGB3 and ITGA6:ITGB4. Its binding to integrins and subsequent ternary complex formation with integrins and IGFR1 are essential for IGF1 signaling. Induces the phosphorylation and activation of IGFR1, MAPK3/ERK1, MAPK1/ERK2 and AKT1. As part of the MAPK/ERK signaling pathway, acts as a negative regulator of apoptosis in cardiomyocytes via promotion of STUB1/CHIP-mediated ubiquitination and degradation of ICER-type isoforms of CREM. The chain is Insulin-like growth factor 1 from Equus caballus (Horse).